We begin with the raw amino-acid sequence, 232 residues long: Ribosomal RNA small subunit methyltransferase G (232 aa).

S-adenosyl-L-methionine contacts are provided by residues Gly-93, Leu-98, 144–145, and Arg-163; that span reads VE.

Belongs to the methyltransferase superfamily. RNA methyltransferase RsmG family.

The protein localises to the cytoplasm. The catalysed reaction is guanosine(527) in 16S rRNA + S-adenosyl-L-methionine = N(7)-methylguanosine(527) in 16S rRNA + S-adenosyl-L-homocysteine. In terms of biological role, specifically methylates the N7 position of guanine in position 527 of 16S rRNA. The sequence is that of Ribosomal RNA small subunit methyltransferase G from Burkholderia pseudomallei (strain 1710b).